Here is a 342-residue protein sequence, read N- to C-terminus: MADLKSTFLDVYSVLKSDLLQDPSFEFTHESRQWLERMLDYNVRGGKLNRGLSVVDSYKLLKQGQDLTEKETFLSCALGWCIEWLQAYFLVLDDIMDNSVTRRGQPCWFRKPKVGMIAINDGILLRNHIHRILKKHFREMPYYVDLVDLFNEVEFQTACGQMIDLITTFDGEKDLSKYSLQIHRRIVEYKTAYYSFYLPVACALLMAGENLENHTDVKTVLVDMGIYFQVQDDYLDCFADPETLGKIGTDIEDFKCSWLVVKALERCSEEQTKILYENYGKAEPSNVAKVKALYKELDLEGAFMEYEKESYEKLTKLIEAHQSKAIQAVLKSFLAKIYKRQK.

Lysine 47, arginine 50, and glutamine 86 together coordinate isopentenyl diphosphate. Aspartate 93 and aspartate 97 together coordinate Mg(2+). A dimethylallyl diphosphate-binding site is contributed by arginine 102. An isopentenyl diphosphate-binding site is contributed by arginine 103. Dimethylallyl diphosphate-binding residues include lysine 190, threonine 191, glutamine 229, lysine 246, and lysine 255.

It belongs to the FPP/GGPP synthase family. Requires Mg(2+) as cofactor.

The protein resides in the cytoplasm. The enzyme catalyses isopentenyl diphosphate + dimethylallyl diphosphate = (2E)-geranyl diphosphate + diphosphate. It catalyses the reaction isopentenyl diphosphate + (2E)-geranyl diphosphate = (2E,6E)-farnesyl diphosphate + diphosphate. Its pathway is isoprenoid biosynthesis; farnesyl diphosphate biosynthesis; farnesyl diphosphate from geranyl diphosphate and isopentenyl diphosphate: step 1/1. It participates in isoprenoid biosynthesis; geranyl diphosphate biosynthesis; geranyl diphosphate from dimethylallyl diphosphate and isopentenyl diphosphate: step 1/1. In terms of biological role, catalyzes the sequential condensation of isopentenyl pyrophosphate with the allylic pyrophosphates, dimethylallyl pyrophosphate, and then with the resultant geranylpyrophosphate to the ultimate product farnesyl pyrophosphate. The protein is Farnesyl pyrophosphate synthase 2 (FPS2) of Arabidopsis thaliana (Mouse-ear cress).